The primary structure comprises 267 residues: Aliphatic sulfonates import ATP-binding protein SsuB 1 (267 aa).

Residues 35-249 enclose the ABC transporter domain; sequence VRVRGLRRVF…RRADPAFDRL (215 aa). 67–74 contacts ATP; that stretch reads GRSGSGKS.

This sequence belongs to the ABC transporter superfamily. Aliphatic sulfonates importer (TC 3.A.1.17.2) family. As to quaternary structure, the complex is composed of two ATP-binding proteins (SsuB), two transmembrane proteins (SsuC) and a solute-binding protein (SsuA).

It is found in the cell membrane. It catalyses the reaction ATP + H2O + aliphatic sulfonate-[sulfonate-binding protein]Side 1 = ADP + phosphate + aliphatic sulfonateSide 2 + [sulfonate-binding protein]Side 1.. Functionally, part of the ABC transporter complex SsuABC involved in aliphatic sulfonates import. Responsible for energy coupling to the transport system. The chain is Aliphatic sulfonates import ATP-binding protein SsuB 1 from Frankia alni (strain DSM 45986 / CECT 9034 / ACN14a).